A 542-amino-acid polypeptide reads, in one-letter code: Putative inactive cadmium/zinc-transporting ATPase HMA3 (542 aa).

Over 1 to 89 (MAEGEESKKM…VRPYGETSLK (89 aa)) the chain is Cytoplasmic. One can recognise an HMA domain in the interval 13-79 (QTSYFDVVGI…ALNQARLEAS (67 aa)). A helical membrane pass occupies residues 90–111 (SQWPSPFAIVSGVLLVLSFFKY). Residues 112–114 (FYS) lie on the Extracellular side of the membrane. Residues 115 to 134 (PLEWLAIVAVVAGVFPILAK) form a helical membrane-spanning segment. Residues 135-141 (AVASVTR) lie on the Cytoplasmic side of the membrane. Residues 142–162 (FRLDINALTLIAVIATLCMQD) traverse the membrane as a helical segment. Position 163 (phenylalanine 163) is a topological domain, extracellular. Residues 164–184 (TEAATIVFLFSVADWLESSAA) traverse the membrane as a helical segment. Residues 185–310 (HKASIVMSSL…QTKTQRFIDK (126 aa)) are Cytoplasmic-facing. The chain crosses the membrane as a helical span at residues 311–333 (CSRYYTPAVVVSAACFAVIPVLL). Residues 334–341 (KVQDLSHW) lie on the Extracellular side of the membrane. A helical membrane pass occupies residues 342–359 (FHLALVVLVSGCPCGLIL). Topologically, residues 360 to 542 (STPVATFCAL…VAQALKELKS (183 aa)) are cytoplasmic.

The protein belongs to the cation transport ATPase (P-type) (TC 3.A.3) family. Type IB subfamily.

It localises to the membrane. This Arabidopsis thaliana (Mouse-ear cress) protein is Putative inactive cadmium/zinc-transporting ATPase HMA3 (HMA3).